A 277-amino-acid chain; its full sequence is Pantothenate synthetase (277 aa).

Methionine 26 to histidine 33 provides a ligand contact to ATP. Catalysis depends on histidine 33, which acts as the Proton donor. A (R)-pantoate-binding site is contributed by glutamine 57. Glutamine 57 provides a ligand contact to beta-alanine. Glycine 144–aspartate 147 provides a ligand contact to ATP. Residue glutamine 150 participates in (R)-pantoate binding. ATP-binding positions include valine 173 and leucine 181–arginine 184.

The protein belongs to the pantothenate synthetase family. As to quaternary structure, homodimer.

It localises to the cytoplasm. The catalysed reaction is (R)-pantoate + beta-alanine + ATP = (R)-pantothenate + AMP + diphosphate + H(+). It participates in cofactor biosynthesis; (R)-pantothenate biosynthesis; (R)-pantothenate from (R)-pantoate and beta-alanine: step 1/1. Catalyzes the condensation of pantoate with beta-alanine in an ATP-dependent reaction via a pantoyl-adenylate intermediate. The polypeptide is Pantothenate synthetase (Paraburkholderia xenovorans (strain LB400)).